We begin with the raw amino-acid sequence, 202 residues long: Protein SYM1 (202 aa).

Transmembrane regions (helical) follow at residues 15 to 31, 48 to 66, 82 to 99, and 143 to 159; these read MAVT…DCVS, AGIY…FRFL, AVFA…MGLL, and VLAS…FLAY.

This sequence belongs to the peroxisomal membrane protein PXMP2/4 family.

It is found in the mitochondrion inner membrane. May be involved in cellular response to stress. Required to maintain mitochondrial DNA (mtDNA) integrity and stability. The sequence is that of Protein SYM1 (SYM1) from Yarrowia lipolytica (strain CLIB 122 / E 150) (Yeast).